Reading from the N-terminus, the 434-residue chain is CCA tRNA nucleotidyltransferase 1, mitochondrial (434 aa).

Residues 1-41 (MQSVLYPWHRQVLRCSWSRLCLLKRYLFTMKLQSPEFQSLF) constitute a mitochondrion transit peptide. Positions 64 and 67 each coordinate ATP. G64 and R67 together coordinate CTP. 2 residues coordinate Mg(2+): D77 and D79. Positions 151, 194, 197, 200, and 203 each coordinate ATP. Residues R151, D194, R197, R200, and R203 each coordinate CTP. A Phosphoserine modification is found at S400. K402 carries the post-translational modification N6-acetyllysine.

This sequence belongs to the tRNA nucleotidyltransferase/poly(A) polymerase family. As to quaternary structure, monomer, and homodimer. It depends on Mg(2+) as a cofactor.

It localises to the mitochondrion. Its subcellular location is the cytoplasm. The protein resides in the nucleus. It carries out the reaction a tRNA precursor + 2 CTP + ATP = a tRNA with a 3' CCA end + 3 diphosphate. It catalyses the reaction a tRNA with a 3' CCA end + 2 CTP + ATP = a tRNA with a 3' CCACCA end + 3 diphosphate. Functionally, nucleotidyltransferase that catalyzes the addition and repair of the essential 3'-terminal CCA sequence in tRNAs, which is necessary for the attachment of amino acids to the 3' terminus of tRNA molecules, using CTP and ATP as substrates. tRNA 3'-terminal CCA addition is required both for tRNA processing and repair. Promotes tRNA repair and recycling downstream of the ribosome-associated quality control (RQC) pathway by mediating addition of the tRNA 3'-terminal CCA following cleavage by ANKZF1 and repair by ELAC1. Also involved in tRNA surveillance by mediating tandem CCA addition to generate a CCACCA at the 3' terminus of unstable tRNAs and tRNA-like transcripts. While stable tRNAs receive only 3'-terminal CCA, unstable tRNAs beginning with GG are marked with CCACCA and rapidly degraded. The structural flexibility of RNA controls the choice between CCA versus CCACCA addition: following the first CCA addition cycle, nucleotide-binding to the active site triggers a clockwise screw motion, producing torque on the RNA. This ejects stable RNAs, whereas unstable RNAs are refolded while bound to the enzyme and subjected to a second CCA catalytic cycle. This chain is CCA tRNA nucleotidyltransferase 1, mitochondrial (Trnt1), found in Mus musculus (Mouse).